A 377-amino-acid polypeptide reads, in one-letter code: MEVPRVGHSISSPTSPCEDMMKNLSLDAIQLCEREGNKSLDSGIAEMEELPVPQNIKISNITCDSFKICWDMDSRSKERITHYFIDLNKKENKNANKFKHKDVPTKLVAKAVPLPMTVRGHWFLSPRTEYTVAVQTASKQGDGDYAVSEWSEINEFCTADYSTVHLTQLMEKAEVIAGRMLRFSVFYRNQHKEYFDHAREAQNNKMLPSVKDNSGSHGSPISGKLEGIFFSCNTEFNTGKPPQDSPYGRYRYQLPAEALFSPKTNLYFGDFYCMYTAYHYVILVIAPQGSPGDDFCKQRLPALDIANNRFMTCSEDEDGQLVFHHAQDLILEVIYTDPVDLSLGTVAEISGHQLMSLSTVNAKKDPSCKTCNISVGR.

A Fibronectin type-III domain is found at 52–161 (VPQNIKISNI…EINEFCTADY (110 aa)).

It belongs to the PHYHIP family.

Functionally, may play a role in the development of the central system. This is Phytanoyl-CoA hydroxylase-interacting protein-like (phyhipl) from Danio rerio (Zebrafish).